Consider the following 367-residue polypeptide: D-alanine--D-alanine ligase (367 aa).

One can recognise an ATP-grasp domain in the interval 148-357 (KMAFEQAGLP…FPELVDKLVQ (210 aa)). 184–239 (EASLGYPCFVKPANLGSSVGISKVRSRQELEDALDNAANYDRRIIVEAGVVAREVE) provides a ligand contact to ATP. Residues aspartate 310, glutamate 324, and asparagine 326 each coordinate Mg(2+).

Belongs to the D-alanine--D-alanine ligase family. Mg(2+) serves as cofactor. The cofactor is Mn(2+).

It localises to the cytoplasm. The catalysed reaction is 2 D-alanine + ATP = D-alanyl-D-alanine + ADP + phosphate + H(+). Its pathway is cell wall biogenesis; peptidoglycan biosynthesis. Its function is as follows. Cell wall formation. This Trichormus variabilis (strain ATCC 29413 / PCC 7937) (Anabaena variabilis) protein is D-alanine--D-alanine ligase.